The primary structure comprises 288 residues: ATP synthase gamma chain (288 aa).

Belongs to the ATPase gamma chain family. F-type ATPases have 2 components, CF(1) - the catalytic core - and CF(0) - the membrane proton channel. CF(1) has five subunits: alpha(3), beta(3), gamma(1), delta(1), epsilon(1). CF(0) has three main subunits: a, b and c.

The protein resides in the cell inner membrane. Produces ATP from ADP in the presence of a proton gradient across the membrane. The gamma chain is believed to be important in regulating ATPase activity and the flow of protons through the CF(0) complex. This chain is ATP synthase gamma chain, found in Stutzerimonas stutzeri (strain A1501) (Pseudomonas stutzeri).